The primary structure comprises 190 residues: Secretory phospholipase A2 (190 aa).

Residues 1–15 form the signal peptide; that stretch reads MKLAYFSSLLPLALA. Cys62 and Cys78 form a disulfide bridge. Ala65 is a Ca(2+) binding site. His81 is a catalytic residue. Asp82 lines the Ca(2+) pocket.

The protein belongs to the phospholipase A2 family. Requires Ca(2+) as cofactor.

Its subcellular location is the lipid droplet. The protein localises to the secreted. The catalysed reaction is a 1,2-diacyl-sn-glycero-3-phosphocholine + H2O = a 1-acyl-sn-glycero-3-phosphocholine + a fatty acid + H(+). In terms of biological role, secretory phospholipase that catalyzes the calcium-dependent hydrolysis of the 2-acyl groups in 3-sn-phosphoglycerides. Increases the ability to utilize insect-derived nutrients and lipids, and promotes lipid dropplets accumulation. Plays a role in virulence, including more efficient penetration of the insect cuticle and evasion of host immune response by repressing the expression of host immunity genes. In Beauveria bassiana (strain ARSEF 2860) (White muscardine disease fungus), this protein is Secretory phospholipase A2.